We begin with the raw amino-acid sequence, 430 residues long: MTITISRIHALEILDSRGNPTLQVGVTLSDGSFAQAGVPSGASTGSREALELRDGDAQRYLGKGVQKALANVKNHFAPALIGKPIYDLAALDRIMLAQDGTDFKTHLGANAILGVSLALARAKGASLKKPLYAVLCPQEEYTLPVPMMNIINGGEHADNSVDIQEFMIVPAGFDRFSEALRAGSEIFHTLKKVLKEQGLNTAVGDEGGFAPDLPSNEAAFAVIMQAIERAGYRAGEQIFLAMDAAASEFYREGRYHLASEQKAYTSAEFVDYLADLCRRYPIVSIEDGLHESDWDGWQLLTQSLGERVQLVGDDLFVTNSAILQEGIDKGVANAILIKPNQIGSLSETLQTIALADAAHYAAIISHRSGETEDTTIADIAVATTATQIKTGSLCRSDRVAKYNRLLTIEDELGTRARYAAKAAFLGKIKA.

Glutamine 164 contributes to the (2R)-2-phosphoglycerate binding site. Catalysis depends on glutamate 206, which acts as the Proton donor. Residues aspartate 243, glutamate 286, and aspartate 313 each coordinate Mg(2+). Residues lysine 338, arginine 367, serine 368, and lysine 389 each contribute to the (2R)-2-phosphoglycerate site. The Proton acceptor role is filled by lysine 338.

The protein belongs to the enolase family. In terms of assembly, component of the RNA degradosome, a multiprotein complex involved in RNA processing and mRNA degradation. The cofactor is Mg(2+).

Its subcellular location is the cytoplasm. The protein localises to the secreted. The protein resides in the cell surface. It catalyses the reaction (2R)-2-phosphoglycerate = phosphoenolpyruvate + H2O. It participates in carbohydrate degradation; glycolysis; pyruvate from D-glyceraldehyde 3-phosphate: step 4/5. In terms of biological role, catalyzes the reversible conversion of 2-phosphoglycerate (2-PG) into phosphoenolpyruvate (PEP). It is essential for the degradation of carbohydrates via glycolysis. The chain is Enolase from Dichelobacter nodosus (strain VCS1703A).